A 263-amino-acid polypeptide reads, in one-letter code: HTH-type transcriptional repressor NanR (263 aa).

The region spanning 30–98 is the HTH gntR-type domain; that stretch reads KKLSEMVEEE…NGERARVSRP (69 aa). Residues 58-77 constitute a DNA-binding region (H-T-H motif); sequence ERELMAFFNVGRPSVREALA.

It belongs to the NanR family.

Transcriptional repressor that controls expression of the genes required for the catabolism of sialic acids. The protein is HTH-type transcriptional repressor NanR of Salmonella arizonae (strain ATCC BAA-731 / CDC346-86 / RSK2980).